The chain runs to 400 residues: MGRAKRVVLAYSGGVDTSVCIPYLKQEWGVEEVITLAADLGQGDELGPIRQKALDSGAVESLVIDATAEFVRDYAFPAIQANSLYEGRYPLSTALARPLIAKLLVEAAAKYGADAVAHGCTGKGNDQVRFDVSIAALNPDLKVLAPAREWGMSREETIAYGERFGIPAPVKKSSPYSIDRNLLGRSIEAGPLEDPLHEPLEEVYALTKAIANTPDEPAYIELGFDQGLPVTLNGQALAPVALIQQLNAIAGEHGIGRIDMIENRLVGIKSREIYETPALLVLIQAHQDLESLVLTADVSQYKRGIENSWSNLVYNGLWYSPLKAALDAFIQQTQQRVTGTVRLRLFKGNATVVGRSSEQSLYSPDMATYGAEDRFDHKAAEGFIYVWGMPTRIWSQTHRA.

Residues 10-18 (AYSGGVDTS) and alanine 38 contribute to the ATP site. Tyrosine 89 contacts L-citrulline. Glycine 119 serves as a coordination point for ATP. Residues threonine 121, asparagine 125, and aspartate 126 each coordinate L-aspartate. Asparagine 125 is an L-citrulline binding site. L-citrulline is bound by residues arginine 129, serine 177, serine 186, glutamate 262, and tyrosine 274.

This sequence belongs to the argininosuccinate synthase family. Type 1 subfamily. In terms of assembly, homotetramer.

The protein resides in the cytoplasm. The catalysed reaction is L-citrulline + L-aspartate + ATP = 2-(N(omega)-L-arginino)succinate + AMP + diphosphate + H(+). The protein operates within amino-acid biosynthesis; L-arginine biosynthesis; L-arginine from L-ornithine and carbamoyl phosphate: step 2/3. The protein is Argininosuccinate synthase of Synechococcus elongatus (strain ATCC 33912 / PCC 7942 / FACHB-805) (Anacystis nidulans R2).